The sequence spans 384 residues: GTPase Obg (384 aa).

Residues 1–159 enclose the Obg domain; the sequence is MKFIDEAKIE…RSLQLELKVL (159 aa). The segment at 20–46 is disordered; the sequence is ATSFRREKFVPRGGPDGGDGGKGGSVW. The span at 33–43 shows a compositional bias: gly residues; that stretch reads GPDGGDGGKGG. The region spanning 160-348 is the OBG-type G domain; the sequence is ADVGLLGMPN…LVHQINQYLT (189 aa). Residues 166–173, 191–195, 213–216, 284–287, and 329–331 each bind GTP; these read GMPNAGKS, FTTLH, DIPG, NKLD, and SAL. Mg(2+) is bound by residues S173 and T193.

Belongs to the TRAFAC class OBG-HflX-like GTPase superfamily. OBG GTPase family. Monomer. The cofactor is Mg(2+).

It is found in the cytoplasm. Its function is as follows. An essential GTPase which binds GTP, GDP and possibly (p)ppGpp with moderate affinity, with high nucleotide exchange rates and a fairly low GTP hydrolysis rate. Plays a role in control of the cell cycle, stress response, ribosome biogenesis and in those bacteria that undergo differentiation, in morphogenesis control. The polypeptide is GTPase Obg (Neisseria meningitidis serogroup C / serotype 2a (strain ATCC 700532 / DSM 15464 / FAM18)).